The primary structure comprises 391 residues: Phosphoprotein (391 aa).

2 positions are modified to phosphothreonine: Thr-10 and Thr-16. Over residues 54–65 the composition is skewed to polar residues; that stretch reads QKNIQHPTASHQ. 2 disordered regions span residues 54-98 and 148-184; these read QKNI…EPLF and PVTEFKRGGPGAAAQGQTIQEEGIDGNGASAGSKERS. Ser-69 carries the phosphoserine modification. Residues Thr-91, Thr-150, and Thr-165 each carry the phosphothreonine modification. The residue at position 188 (Ser-188) is a Phosphoserine. The segment at 216 to 279 is multimerization; that stretch reads ISANEIMDLL…MATVKIMDPG (64 aa). Residues 218-245 are a coiled coil; that stretch reads ANEIMDLLRGMDARLQHLEQKVDKVLAQ. Thr-250 carries the phosphothreonine modification. Position 257 is a phosphoserine (Ser-257). Residues Thr-258 and Thr-282 each carry the phosphothreonine modification. Residues Ser-292 and Ser-294 each carry the phosphoserine modification. Residue Thr-298 is modified to Phosphothreonine. 2 positions are modified to phosphoserine: Ser-301 and Ser-374. An interaction with the nucleoprotein region spans residues 343–391; the sequence is AGRKVMITKMITDCVANPQMKQAFEQRLAKASTEDALNDIKRDIIRSAI. Phosphothreonine is present on Thr-375.

This sequence belongs to the rubulavirus/avulavirus P protein family. In terms of assembly, homotetramer. Interacts (via multimerization domain) with polymerase L; this interaction forms the polymerase L-P complex. Interacts (via N-terminus) with N0 (via Ncore); this interaction allows P to chaperon N0 to avoid N polymerization before encapsidation. Interacts (via C-terminus) with N-RNA template; this interaction positions the polymerase on the template for both transcription and replication. Interacts with host RPS6KB1 kinase; this interaction may play a role in the viral replication and transcription.

In terms of biological role, essential cofactor of the RNA polymerase L that plays a central role in the transcription and replication by forming the polymerase complex with RNA polymerase L and recruiting L to the genomic N-RNA template for RNA synthesis. Also plays a central role in the encapsidation of nascent RNA chains by forming the encapsidation complex with the nucleocapsid protein N (N-P complex). Acts as a chaperone for newly synthesized free N protein, so-called N0, allowing encapsidation of nascent RNA chains during replication. The nucleoprotein protein N prevents excessive phosphorylation of P, which leads to down-regulation of viral transcription/ replication. Participates, together with N, in the formation of viral factories (viroplasms), which are large inclusions in the host cytoplasm where replication takes place. This chain is Phosphoprotein, found in Mumps virus (strain Enders) (MuV).